A 430-amino-acid polypeptide reads, in one-letter code: Trigger factor (430 aa).

The 86-residue stretch at 157–242 (GDLVALETWS…AVEVSEPVLP (86 aa)) folds into the PPIase FKBP-type domain.

Belongs to the FKBP-type PPIase family. Tig subfamily.

It is found in the cytoplasm. It carries out the reaction [protein]-peptidylproline (omega=180) = [protein]-peptidylproline (omega=0). Functionally, involved in protein export. Acts as a chaperone by maintaining the newly synthesized protein in an open conformation. Functions as a peptidyl-prolyl cis-trans isomerase. This is Trigger factor from Xanthomonas axonopodis pv. citri (strain 306).